The sequence spans 341 residues: Eukaryotic translation initiation factor 3 subunit I (341 aa).

WD repeat units lie at residues 8–49, 50–91, 135–184, 189–228, and 286–325; these read GHER…GTYR, GHQG…KTWD, QSDE…LLYN, ELNQ…VLKS, and GHFG…YDFL.

The protein belongs to the eIF-3 subunit I family. Component of the eukaryotic translation initiation factor 3 (eIF-3) complex.

It localises to the cytoplasm. Component of the eukaryotic translation initiation factor 3 (eIF-3) complex, which is involved in protein synthesis of a specialized repertoire of mRNAs and, together with other initiation factors, stimulates binding of mRNA and methionyl-tRNAi to the 40S ribosome. The eIF-3 complex specifically targets and initiates translation of a subset of mRNAs involved in cell proliferation. The chain is Eukaryotic translation initiation factor 3 subunit I from Chaetomium globosum (strain ATCC 6205 / CBS 148.51 / DSM 1962 / NBRC 6347 / NRRL 1970) (Soil fungus).